The following is a 128-amino-acid chain: Small ribosomal subunit protein uS12 (128 aa).

The tract at residues 1 to 25 (MPTIQQLIRRGRKTKASKTASPALE) is disordered. D89 is modified (3-methylthioaspartic acid). Residues 101 to 128 (SLDTSGVADRRNSRSKYGAKRPKEAAAK) form a disordered region.

Belongs to the universal ribosomal protein uS12 family. In terms of assembly, part of the 30S ribosomal subunit. Contacts proteins S8 and S17. May interact with IF1 in the 30S initiation complex.

With S4 and S5 plays an important role in translational accuracy. Its function is as follows. Interacts with and stabilizes bases of the 16S rRNA that are involved in tRNA selection in the A site and with the mRNA backbone. Located at the interface of the 30S and 50S subunits, it traverses the body of the 30S subunit contacting proteins on the other side and probably holding the rRNA structure together. The combined cluster of proteins S8, S12 and S17 appears to hold together the shoulder and platform of the 30S subunit. This Chlorobium phaeobacteroides (strain BS1) protein is Small ribosomal subunit protein uS12.